The chain runs to 239 residues: ATP synthase subunit a (239 aa).

5 helical membrane passes run 27–47 (GQVF…VVLG), 86–106 (LPFI…GALI), 125–145 (INTT…AGLS), 190–210 (LAVA…VMLL), and 211–231 (GLFT…FYIG).

The protein belongs to the ATPase A chain family. As to quaternary structure, F-type ATPases have 2 components, CF(1) - the catalytic core - and CF(0) - the membrane proton channel. CF(1) has five subunits: alpha(3), beta(3), gamma(1), delta(1), epsilon(1). CF(0) has four main subunits: a, b, b' and c.

Its subcellular location is the cellular thylakoid membrane. In terms of biological role, key component of the proton channel; it plays a direct role in the translocation of protons across the membrane. This Synechococcus sp. (strain RCC307) protein is ATP synthase subunit a.